Reading from the N-terminus, the 425-residue chain is E3 ubiquitin-protein ligase TRIM31 (425 aa).

The RING-type zinc-finger motif lies at 16 to 57 (CPICLDILQKPVTIDCGHNFCLKCITQIGETSCGFFKCPLCK). The B box-type zinc finger occupies 90–131 (RKEATCPRHQEMFHYFCEDDGKFLCFVCRESKDHKSHNVSLI). The Zn(2+) site is built by cysteine 95, histidine 98, cysteine 117, and histidine 123. Coiled-coil stretches lie at residues 126–162 (HNVS…VKAQ) and 270–307 (LELE…DENR). The tract at residues 328-360 (HKMNKTSEPGSSSAGGRTTSGPPNHHSSAPSHS) is disordered. Over residues 336–360 (PGSSSAGGRTTSGPPNHHSSAPSHS) the composition is skewed to low complexity.

This sequence belongs to the TRIM/RBCC family. In terms of assembly, may form oligomers. Interacts with isoform p52shc of SHC1. Auto-ubiquitinated (in vitro). As to expression, up-regulated in gastric adenocarcinomas.

It is found in the cytoplasm. The protein resides in the mitochondrion. It carries out the reaction S-ubiquitinyl-[E2 ubiquitin-conjugating enzyme]-L-cysteine + [acceptor protein]-L-lysine = [E2 ubiquitin-conjugating enzyme]-L-cysteine + N(6)-ubiquitinyl-[acceptor protein]-L-lysine.. The protein operates within protein modification; protein ubiquitination. E3 ubiquitin-protein ligase that acts as a regulator of antiviral immune response and inflammation by mediating ubiquitination of substrates. Acts as a regulator of innate immune defense against viruses by mediating 'Lys-63'-linked ubiquitination of MAVS, promoting MAVS polymerization and formation of three-stranded helical filaments on mitochondria. Acts as a negative regulator of the NLRP3 inflammasome by catalyzing 'Lys-48'-linked ubiquitination of NLRP3, leading to its degradation. Regulator of Src-induced anchorage independent cell growth. The polypeptide is E3 ubiquitin-protein ligase TRIM31 (Homo sapiens (Human)).